The chain runs to 61 residues: uncharacterized protein (61 aa).

Residues 1-20 are Extracellular-facing; the sequence is MSSTTSTINLSSLGSAINDV. Residues 21–41 form a helical membrane-spanning segment; that stretch reads LNIIVQYLPVFVTVAVLFGII. Over 42–61 the chain is Cytoplasmic; it reads TYMTGGLGGLFSGITGIFGS.

The protein resides in the host membrane. This is an uncharacterized protein from Acidianus filamentous virus 2 (isolate Italy/Pozzuoli) (AFV-2).